We begin with the raw amino-acid sequence, 381 residues long: L-lactate dehydrogenase (381 aa).

One can recognise an FMN hydroxy acid dehydrogenase domain in the interval Met1–Gly380. Tyr24 serves as a coordination point for substrate. FMN is bound by residues Ser106 and Gln127. Tyr129 serves as a coordination point for substrate. Residue Thr155 participates in FMN binding. Residue Arg164 participates in substrate binding. Lys251 is a binding site for FMN. Residue His275 is the Proton acceptor of the active site. Arg278 contributes to the substrate binding site. Asp306–Arg330 is an FMN binding site.

It belongs to the FMN-dependent alpha-hydroxy acid dehydrogenase family. Homotetramer. FMN serves as cofactor.

It is found in the cell inner membrane. The catalysed reaction is (S)-lactate + A = pyruvate + AH2. Functionally, catalyzes the conversion of L-lactate to pyruvate. Is coupled to the respiratory chain. The chain is L-lactate dehydrogenase from Pseudomonas paraeruginosa (strain DSM 24068 / PA7) (Pseudomonas aeruginosa (strain PA7)).